The following is an 816-amino-acid chain: Phosphatidylinositol 4-kinase beta (816 aa).

Disordered stretches follow at residues 1–29, 99–121, and 250–318; these read MGDM…GGSL, EEED…RRRQ, and RKRE…SFSS. Gly2 carries the post-translational modification N-acetylglycine. Residues 2-68 form an interaction with ACBD3 region; it reads GDMVVEPATL…VKLLHGGVAI (67 aa). Positions 10–29 are enriched in low complexity; the sequence is TLKPTSEPTPSPSGNNGGSL. In terms of domain architecture, PIK helical spans 61–242; it reads LLHGGVAISS…GTKLRKLILS (182 aa). Ser258 is modified (phosphoserine). At Thr263 the chain carries Phosphothreonine. A phosphoserine mark is found at Ser266, Ser275, Ser277, Ser284, and Ser294. 2 stretches are compositionally biased toward polar residues: residues 278-297 and 306-318; these read DATA…SNPK and SSST…SFSS. Ser428 carries the phosphoserine modification. Thr438 is modified (phosphothreonine). Phosphoserine is present on Ser511. 2 positions are modified to phosphothreonine: Thr517 and Thr519. Positions 535–801 constitute a PI3K/PI4K catalytic domain; the sequence is EPWQEKVRRI…MVDGSMRSIT (267 aa). A G-loop region spans residues 541-547; the sequence is VRRIREG. The tract at residues 668 to 676 is catalytic loop; it reads QVKDRHNGN. An activation loop region spans residues 687–711; sequence HIDFGFILSSSPRNLGFETSAFKLT.

Belongs to the PI3/PI4-kinase family. Type III PI4K subfamily. Interacts with ARF1 and ARF3 in the Golgi complex, but not with ARF4, ARF5 or ARF6. Interacts with NCS1/FREQ in a calcium-independent manner. Interacts with CALN1/CABP8 and CALN2/CABP7; in a calcium-dependent manner; this interaction competes with NCS1/FREQ binding. Interacts with ACBD3. Interacts with ARMH3, YWHAB, YWHAE, YWHAG, YWHAH, YWHAQ, YWHAZ and SFN. Interacts with GGA2 (via VHS domain); the interaction is important for PI4KB location at the Golgi apparatus membrane. Interacts with ATG9A. It depends on Mg(2+) as a cofactor. Mn(2+) serves as cofactor. As to expression, strongly expressed in brain, kidney, lung, small intestine, uterus and adrenal gland. Weaker expression in liver, heart, skeletal muscle, thymus and testis. Not detected in spleen.

The protein resides in the golgi apparatus. It is found in the endomembrane system. Its subcellular location is the mitochondrion outer membrane. It localises to the rough endoplasmic reticulum membrane. The protein localises to the golgi apparatus membrane. It catalyses the reaction a 1,2-diacyl-sn-glycero-3-phospho-(1D-myo-inositol) + ATP = a 1,2-diacyl-sn-glycero-3-phospho-(1D-myo-inositol 4-phosphate) + ADP + H(+). Inhibited by wortmannin. Increased kinase activity upon interaction with NCS1/FREQ. Phosphorylates phosphatidylinositol (PI) in the first committed step in the production of the second messenger inositol-1,4,5,-trisphosphate (PIP). May regulate Golgi disintegration/reorganization during mitosis, possibly via its phosphorylation. Involved in Golgi-to-plasma membrane trafficking. May play an important role in the inner ear development. This Rattus norvegicus (Rat) protein is Phosphatidylinositol 4-kinase beta (Pi4kb).